The sequence spans 151 residues: Ribosome maturation factor RimP (151 aa).

Belongs to the RimP family.

The protein resides in the cytoplasm. Required for maturation of 30S ribosomal subunits. The polypeptide is Ribosome maturation factor RimP (Aliivibrio fischeri (strain ATCC 700601 / ES114) (Vibrio fischeri)).